Consider the following 181-residue polypeptide: Salmonella anti-inflammatory response activator (181 aa).

A helical membrane pass occupies residues F4–N24.

As to quaternary structure, interacts with host (human) STAT3.

It localises to the membrane. The protein localises to the host cytoplasm. A Salmonella strain-specific effector that induces a host STAT3-dependent anti-inflammatory pathway. In bacteria-infected host cells (human) leads to phosphorylation of host STAT3, at least on 'Tyr-705' and interleukin-10 (IL-10, IL10) production; expressing the gene alone in host cells induces STAT3 phosphorylation and IL-10 production. IL-10 production requires STAT3 in infected cells. Contributes to virulence in mouse infection models. Encoded in only a few S.typhimurium serovars, it may be a specific effector for adaptation to bovine hosts. This chain is Salmonella anti-inflammatory response activator, found in Salmonella typhimurium (strain 14028s / SGSC 2262).